We begin with the raw amino-acid sequence, 411 residues long: Dual-specificity RNA methyltransferase RlmN (411 aa).

The active-site Proton acceptor is Glu125. The Radical SAM core domain maps to 131-380; that stretch reads EEGRGTLCIS…IRTPRGRDIL (250 aa). Cys138 and Cys383 are joined by a disulfide. Residues Cys145, Cys149, and Cys152 each coordinate [4Fe-4S] cluster. Residues 209 to 210, Ser241, 263 to 265, and Asn340 each bind S-adenosyl-L-methionine; these read GE and SLH. Catalysis depends on Cys383, which acts as the S-methylcysteine intermediate.

The protein belongs to the radical SAM superfamily. RlmN family. [4Fe-4S] cluster serves as cofactor.

It localises to the cytoplasm. It catalyses the reaction adenosine(2503) in 23S rRNA + 2 reduced [2Fe-2S]-[ferredoxin] + 2 S-adenosyl-L-methionine = 2-methyladenosine(2503) in 23S rRNA + 5'-deoxyadenosine + L-methionine + 2 oxidized [2Fe-2S]-[ferredoxin] + S-adenosyl-L-homocysteine. The catalysed reaction is adenosine(37) in tRNA + 2 reduced [2Fe-2S]-[ferredoxin] + 2 S-adenosyl-L-methionine = 2-methyladenosine(37) in tRNA + 5'-deoxyadenosine + L-methionine + 2 oxidized [2Fe-2S]-[ferredoxin] + S-adenosyl-L-homocysteine. Functionally, specifically methylates position 2 of adenine 2503 in 23S rRNA and position 2 of adenine 37 in tRNAs. m2A2503 modification seems to play a crucial role in the proofreading step occurring at the peptidyl transferase center and thus would serve to optimize ribosomal fidelity. The sequence is that of Dual-specificity RNA methyltransferase RlmN from Brucella abortus (strain S19).